Here is a 397-residue protein sequence, read N- to C-terminus: Tryptophan synthase beta chain (397 aa).

Lys88 is subject to N6-(pyridoxal phosphate)lysine.

This sequence belongs to the TrpB family. Tetramer of two alpha and two beta chains. Pyridoxal 5'-phosphate is required as a cofactor.

The catalysed reaction is (1S,2R)-1-C-(indol-3-yl)glycerol 3-phosphate + L-serine = D-glyceraldehyde 3-phosphate + L-tryptophan + H2O. It functions in the pathway amino-acid biosynthesis; L-tryptophan biosynthesis; L-tryptophan from chorismate: step 5/5. The beta subunit is responsible for the synthesis of L-tryptophan from indole and L-serine. The polypeptide is Tryptophan synthase beta chain (Haemophilus influenzae (strain 86-028NP)).